We begin with the raw amino-acid sequence, 160 residues long: Phosphopantetheine adenylyltransferase (160 aa).

Ser-9 is a substrate binding site. ATP contacts are provided by residues 9–10 and His-17; that span reads SF. 3 residues coordinate substrate: Lys-41, Thr-73, and Arg-87. Residues 88–90, Glu-98, and 123–129 each bind ATP; these read GMR and YTFFSSS.

This sequence belongs to the bacterial CoaD family. Homohexamer. Mg(2+) is required as a cofactor.

The protein localises to the cytoplasm. The catalysed reaction is (R)-4'-phosphopantetheine + ATP + H(+) = 3'-dephospho-CoA + diphosphate. The protein operates within cofactor biosynthesis; coenzyme A biosynthesis; CoA from (R)-pantothenate: step 4/5. In terms of biological role, reversibly transfers an adenylyl group from ATP to 4'-phosphopantetheine, yielding dephospho-CoA (dPCoA) and pyrophosphate. The polypeptide is Phosphopantetheine adenylyltransferase (Roseiflexus castenholzii (strain DSM 13941 / HLO8)).